The primary structure comprises 181 residues: Protein GrpE (181 aa).

Residues 1–20 (MENTQENPASQSAEENGSET) are compositionally biased toward polar residues. The disordered stretch occupies residues 1 to 39 (MENTQENPASQSAEENGSETQAAQDAAPAAEAADAALAE). A compositionally biased stretch (low complexity) spans 21-39 (QAAQDAAPAAEAADAALAE).

The protein belongs to the GrpE family. In terms of assembly, homodimer.

The protein resides in the cytoplasm. Participates actively in the response to hyperosmotic and heat shock by preventing the aggregation of stress-denatured proteins, in association with DnaK and GrpE. It is the nucleotide exchange factor for DnaK and may function as a thermosensor. Unfolded proteins bind initially to DnaJ; upon interaction with the DnaJ-bound protein, DnaK hydrolyzes its bound ATP, resulting in the formation of a stable complex. GrpE releases ADP from DnaK; ATP binding to DnaK triggers the release of the substrate protein, thus completing the reaction cycle. Several rounds of ATP-dependent interactions between DnaJ, DnaK and GrpE are required for fully efficient folding. This Burkholderia multivorans (strain ATCC 17616 / 249) protein is Protein GrpE.